Here is a 208-residue protein sequence, read N- to C-terminus: Holliday junction branch migration complex subunit RuvA (208 aa).

The tract at residues 1–63 is domain I; that stretch reads MIAFVSGPVA…EDSLTLYGFA (63 aa). The interval 64 to 142 is domain II; the sequence is NDDERQVFEL…EPVGAHIGQQ (79 aa). A flexible linker region spans residues 143–147; the sequence is GIGTP. A domain III region spans residues 148-208; sequence VTSGWRDQLQ…AALQTLNRAR (61 aa).

Belongs to the RuvA family. Homotetramer. Forms an RuvA(8)-RuvB(12)-Holliday junction (HJ) complex. HJ DNA is sandwiched between 2 RuvA tetramers; dsDNA enters through RuvA and exits via RuvB. An RuvB hexamer assembles on each DNA strand where it exits the tetramer. Each RuvB hexamer is contacted by two RuvA subunits (via domain III) on 2 adjacent RuvB subunits; this complex drives branch migration. In the full resolvosome a probable DNA-RuvA(4)-RuvB(12)-RuvC(2) complex forms which resolves the HJ.

It is found in the cytoplasm. The RuvA-RuvB-RuvC complex processes Holliday junction (HJ) DNA during genetic recombination and DNA repair, while the RuvA-RuvB complex plays an important role in the rescue of blocked DNA replication forks via replication fork reversal (RFR). RuvA specifically binds to HJ cruciform DNA, conferring on it an open structure. The RuvB hexamer acts as an ATP-dependent pump, pulling dsDNA into and through the RuvAB complex. HJ branch migration allows RuvC to scan DNA until it finds its consensus sequence, where it cleaves and resolves the cruciform DNA. The sequence is that of Holliday junction branch migration complex subunit RuvA from Streptomyces griseus subsp. griseus (strain JCM 4626 / CBS 651.72 / NBRC 13350 / KCC S-0626 / ISP 5235).